We begin with the raw amino-acid sequence, 353 residues long: Neutral protease 2 homolog AO090001000135 (353 aa).

A signal peptide spans 1 to 19 (MRFISVSSLLLALAPALNA). Positions 20-176 (VPVEVAGSAQ…TQAVKILERR (157 aa)) are excised as a propeptide. Disulfide bonds link C182–C254 and C261–C279. H304 contacts Zn(2+). The active site involves E305. H308 and D319 together coordinate Zn(2+).

The protein belongs to the peptidase M35 family. It depends on Zn(2+) as a cofactor.

It localises to the secreted. The catalysed reaction is Preferential cleavage of bonds with hydrophobic residues in P1'. Also 3-Asn-|-Gln-4 and 8-Gly-|-Ser-9 bonds in insulin B chain.. Secreted metalloproteinase that allows assimilation of proteinaceous substrates. Shows high activities on basic nuclear substrates such as histone and protamine. This is Neutral protease 2 homolog AO090001000135 from Aspergillus oryzae (strain ATCC 42149 / RIB 40) (Yellow koji mold).